The following is a 463-amino-acid chain: Glucagon-like peptide 1 receptor (463 aa).

Positions 1–21 (MAVTPSLLRLALLLLGAVGRA) are cleaved as a signal peptide. The Extracellular portion of the chain corresponds to 22–139 (GPRPQGATVS…KQGERNSPEE (118 aa)). Cystine bridges form between Cys-46–Cys-71, Cys-62–Cys-104, and Cys-85–Cys-126. N-linked (GlcNAc...) asparagine glycans are attached at residues Asn-63, Asn-82, and Asn-115. A helical transmembrane segment spans residues 140-164 (QLLSLYIIYTVGYALSFSALVIASA). Residues 165-175 (ILVSFRHLHCT) lie on the Cytoplasmic side of the membrane. The chain crosses the membrane as a helical span at residues 176-201 (RNYIHLNLFASFILRALSVFIKDAAL). Over 202-227 (KWMYSTAAQQHQWDGLLSYQDSLGCR) the chain is Extracellular. Cys-226 and Cys-296 are oxidised to a cystine. The helical transmembrane segment at 228 to 251 (LVFLLMQYCVAANYYWLLVEGVYL) threads the bilayer. At 252–265 (YTLLAFSVFSEQRI) the chain is on the cytoplasmic side. Residues 266–290 (FKLYLSIGWGVPLLFVIPWGIVKYL) traverse the membrane as a helical segment. Topologically, residues 291-305 (YEDEGCWTRNSNMNY) are extracellular. Residues 306-328 (WLIIRLPILFAIGVNFLVFIRVI) traverse the membrane as a helical segment. Topologically, residues 329-348 (CIVIAKLKANLMCKTDIKCR) are cytoplasmic. An ADP-ribosylcysteine modification is found at Cys-341. Residue Arg-348 is modified to ADP-ribosylarginine. Residues 349–370 (LAKSTLTLIPLLGTHEVIFAFV) traverse the membrane as a helical segment. Positions 352–355 (STLT) are important for allosteric inhibitor binding. Topologically, residues 371–383 (MDEHARGTLRFVK) are extracellular. The chain crosses the membrane as a helical span at residues 384 to 404 (LFTELSFTSFQGFMVAVLYCF). Over 405-463 (VNNEVQMEFRKSWERWRLERLNIQRDSSMKPLKCPTSSVSSGATVGSSVYAATCQNSCS) the chain is Cytoplasmic.

The protein belongs to the G-protein coupled receptor 2 family. In terms of assembly, may form homodimers and heterodimers with GIPR. Post-translationally, N-glycosylation enhances cell surface expression and lengthens receptor half-life by preventing degradation in the ER. As to expression, pancreatic islets, stomach, lung, rat insulinoma cell line.

The protein resides in the cell membrane. Its function is as follows. G-protein coupled receptor for glucagon-like peptide 1 (GLP-1). Ligand binding triggers activation of a signaling cascade that leads to the activation of adenylyl cyclase and increased intracellular cAMP levels. Plays a role in regulating insulin secretion in response to GLP-1. The protein is Glucagon-like peptide 1 receptor (Glp1r) of Rattus norvegicus (Rat).